We begin with the raw amino-acid sequence, 633 residues long: RpoH suppressor (633 aa).

Residues 11–410 form the PNPLA domain; it reads LVMKGGITSG…SSNFPIHLFD (400 aa). 3 helical membrane-spanning segments follow: residues 38 to 58, 133 to 153, and 159 to 179; these read NIGG…AAVG, IAPV…YAVG, and IAAA…FAVL. The short motif at 41-45 is the GXSXG element; that stretch reads GTSAG. The active-site Nucleophile is the S43. Residues 342–380 are disordered; sequence ARRESLPGSDGENEAEDTTSDEDEQKTVLDSTEALTTGG. Residues 352–365 are compositionally biased toward acidic residues; sequence GENEAEDTTSDEDE. Residue D397 is the Proton acceptor of the active site. The DGA/G signature appears at 397–399; that stretch reads DGG. Residues 605–624 form a disordered region; the sequence is EGEKWSGEGPDLTKTAPRPL.

The protein localises to the cell membrane. In terms of biological role, this protein is non-essential for R.meliloti growth, but induces a heat-shock response in temperature-sensitive E.coli K165 by elevating levels of sigma 32 (mechanism unknown). This chain is RpoH suppressor (suhR), found in Rhizobium meliloti (strain 1021) (Ensifer meliloti).